We begin with the raw amino-acid sequence, 363 residues long: Histidinol-phosphate aminotransferase (363 aa).

K220 bears the N6-(pyridoxal phosphate)lysine mark.

Belongs to the class-II pyridoxal-phosphate-dependent aminotransferase family. Histidinol-phosphate aminotransferase subfamily. In terms of assembly, homodimer. Pyridoxal 5'-phosphate is required as a cofactor.

The enzyme catalyses L-histidinol phosphate + 2-oxoglutarate = 3-(imidazol-4-yl)-2-oxopropyl phosphate + L-glutamate. The protein operates within amino-acid biosynthesis; L-histidine biosynthesis; L-histidine from 5-phospho-alpha-D-ribose 1-diphosphate: step 7/9. This Chlorobium chlorochromatii (strain CaD3) protein is Histidinol-phosphate aminotransferase.